Here is a 274-residue protein sequence, read N- to C-terminus: Pyrroline-5-carboxylate reductase 3 (274 aa).

Position 2 is an N-acetylalanine (Ala-2).

Belongs to the pyrroline-5-carboxylate reductase family. Homodecamer; composed of 5 homodimers.

It is found in the cytoplasm. It catalyses the reaction L-proline + NADP(+) = (S)-1-pyrroline-5-carboxylate + NADPH + 2 H(+). The enzyme catalyses L-proline + NAD(+) = (S)-1-pyrroline-5-carboxylate + NADH + 2 H(+). It functions in the pathway amino-acid biosynthesis; L-proline biosynthesis; L-proline from L-glutamate 5-semialdehyde: step 1/1. Its function is as follows. Oxidoreductase that catalyzes the last step in proline biosynthesis, which corresponds to the reduction of pyrroline-5-carboxylate (P5C) to L-proline using NAD(P)H. Proline is synthesized from either glutamate or ornithine; both are converted to P5C, and then to proline via pyrroline-5-carboxylate reductases (PYCRs). PYCR3 is exclusively linked to the biosynthesis of proline from ornithine. The protein is Pyrroline-5-carboxylate reductase 3 of Mus musculus (Mouse).